We begin with the raw amino-acid sequence, 355 residues long: Putative inositol monophosphatase 3 (355 aa).

Residues 16–36 (VPATIFAILLTIVLVYFLNFH) traverse the membrane as a helical segment. Positions 127, 167, 169, 170, and 292 each coordinate Mg(2+). Substrate is bound at residue E127. Residues 169–172 (LDAT) and D292 contribute to the substrate site.

The protein belongs to the inositol monophosphatase superfamily. Mg(2+) serves as cofactor.

The protein localises to the membrane. The catalysed reaction is a myo-inositol phosphate + H2O = myo-inositol + phosphate. It functions in the pathway polyol metabolism; myo-inositol biosynthesis; myo-inositol from D-glucose 6-phosphate: step 2/2. The sequence is that of Putative inositol monophosphatase 3 from Drosophila pseudoobscura pseudoobscura (Fruit fly).